The chain runs to 201 residues: MYDYIKGIVKTITPEYIVVETGQIGYQIITGNPFSFQRLEGTEAQVFLYQHVREDNISLFGFQSTEERYLFKKLLSVSGIGPKSALAIIASGDVVPLITAIESEDDVYLTKFPSVGKKTARQIILDLKGKLADVVASEIVYKAAENDIVTGLSPQLEEAVLALEALGYSTRELKKVIPKMAKENDLTSDAYIKLALRLMTK.

Residues 1-63 are domain I; sequence MYDYIKGIVK…EDNISLFGFQ (63 aa). The tract at residues 64-142 is domain II; it reads STEERYLFKK…DVVASEIVYK (79 aa). A flexible linker region spans residues 143–153; sequence AAENDIVTGLS. The segment at 153–201 is domain III; sequence SPQLEEAVLALEALGYSTRELKKVIPKMAKENDLTSDAYIKLALRLMTK.

The protein belongs to the RuvA family. In terms of assembly, homotetramer. Forms an RuvA(8)-RuvB(12)-Holliday junction (HJ) complex. HJ DNA is sandwiched between 2 RuvA tetramers; dsDNA enters through RuvA and exits via RuvB. An RuvB hexamer assembles on each DNA strand where it exits the tetramer. Each RuvB hexamer is contacted by two RuvA subunits (via domain III) on 2 adjacent RuvB subunits; this complex drives branch migration. In the full resolvosome a probable DNA-RuvA(4)-RuvB(12)-RuvC(2) complex forms which resolves the HJ.

It is found in the cytoplasm. In terms of biological role, the RuvA-RuvB-RuvC complex processes Holliday junction (HJ) DNA during genetic recombination and DNA repair, while the RuvA-RuvB complex plays an important role in the rescue of blocked DNA replication forks via replication fork reversal (RFR). RuvA specifically binds to HJ cruciform DNA, conferring on it an open structure. The RuvB hexamer acts as an ATP-dependent pump, pulling dsDNA into and through the RuvAB complex. HJ branch migration allows RuvC to scan DNA until it finds its consensus sequence, where it cleaves and resolves the cruciform DNA. The chain is Holliday junction branch migration complex subunit RuvA from Listeria innocua serovar 6a (strain ATCC BAA-680 / CLIP 11262).